A 103-amino-acid polypeptide reads, in one-letter code: MVQEKIRIKLKAFDHKVLDQSVKQIIDTVKRSGGVIKGPIPLPTQRKVWCVLRSPHKFEQSREHFEMRIHKRLIDIENATPQTIEALMDISLPAGVDVEIKLS.

This sequence belongs to the universal ribosomal protein uS10 family. In terms of assembly, part of the 30S ribosomal subunit.

Involved in the binding of tRNA to the ribosomes. This is Small ribosomal subunit protein uS10 from Persephonella marina (strain DSM 14350 / EX-H1).